The chain runs to 242 residues: Dihydropteridine reductase (242 aa).

Position 12–36 (Leu-12–Ala-36) interacts with NADP(+). N6-succinyllysine is present on residues Lys-71, Lys-77, Lys-94, and Lys-100. Catalysis depends on Tyr-148, which acts as the Proton acceptor.

Belongs to the short-chain dehydrogenases/reductases (SDR) family. Homodimer.

The catalysed reaction is 5,6,7,8-tetrahydropteridine + NAD(+) = 6,7-dihydropteridine + NADH + H(+). The enzyme catalyses 5,6,7,8-tetrahydropteridine + NADP(+) = 6,7-dihydropteridine + NADPH + H(+). Its function is as follows. Catalyzes the conversion of quinonoid dihydrobiopterin into tetrahydrobiopterin. In Bos taurus (Bovine), this protein is Dihydropteridine reductase (QDPR).